A 134-amino-acid chain; its full sequence is Retinoid-binding protein 7 (134 aa).

It belongs to the calycin superfamily. Fatty-acid binding protein (FABP) family. In terms of tissue distribution, expressed primarily in kidney, heart and transverse colon. Detected in adult lymph node, appendix, ascending colon, and in fetal heart and spleen.

Its subcellular location is the cytoplasm. Intracellular transport of retinol. In Homo sapiens (Human), this protein is Retinoid-binding protein 7 (RBP7).